A 624-amino-acid chain; its full sequence is Kelch-like protein diablo (624 aa).

The span at 1–21 (MGDPLLPGSTGLGSGPAAAAT) shows a compositional bias: low complexity. Positions 1-55 (MGDPLLPGSTGLGSGPAAAATGGSGTTGTGLGSGGTSGAERPPSPARLTHTSEKH) are disordered. The segment covering 22–37 (GGSGTTGTGLGSGGTS) has biased composition (gly residues). Residues 73 to 140 (CDVVLNVGGR…CYTAHIIVEE (68 aa)) form the BTB domain. The region spanning 175-277 (CLGIRAFADT…SPKFLVGTVG (103 aa)) is the BACK domain. 6 Kelch repeats span residues 324–370 (VLFA…VLND), 372–418 (LYAV…VLDG), 419–465 (FLYA…VLSG), 467–512 (LYAI…VFNN), 514–559 (IYAV…VVNG), and 560–606 (QLYA…VMRA).

The protein operates within protein modification; protein ubiquitination. Its function is as follows. Probable substrate-specific adapter of an E3 ubiquitin-protein ligase complex which mediates the ubiquitination and subsequent proteasomal degradation of target proteins. May have a role in synapse differentiation and growth. The chain is Kelch-like protein diablo from Drosophila virilis (Fruit fly).